A 397-amino-acid chain; its full sequence is Elongation factor Tu (397 aa).

The tr-type G domain occupies 10 to 207; that stretch reads KPHCNIGTIG…AVDEWIPQPE (198 aa). Residues 19 to 26 are G1; that stretch reads GHVDHGKT. 19–26 contacts GTP; it reads GHVDHGKT. Thr26 is a binding site for Mg(2+). Positions 61–65 are G2; the sequence is GITIS. Positions 82–85 are G3; that stretch reads DCPG. Residues 82-86 and 137-140 each bind GTP; these read DCPGH and NKVD. The segment at 137–140 is G4; it reads NKVD. The tract at residues 175 to 177 is G5; it reads SAL.

The protein belongs to the TRAFAC class translation factor GTPase superfamily. Classic translation factor GTPase family. EF-Tu/EF-1A subfamily. As to quaternary structure, monomer.

The protein localises to the cytoplasm. The enzyme catalyses GTP + H2O = GDP + phosphate + H(+). GTP hydrolase that promotes the GTP-dependent binding of aminoacyl-tRNA to the A-site of ribosomes during protein biosynthesis. This is Elongation factor Tu from Sphingopyxis alaskensis (strain DSM 13593 / LMG 18877 / RB2256) (Sphingomonas alaskensis).